A 31-amino-acid chain; its full sequence is Photosystem II reaction center protein T (31 aa).

The chain crosses the membrane as a helical span at residues 3 to 23; sequence ALVYTFLLVGTLGIIFFSIFF.

The protein belongs to the PsbT family. In terms of assembly, PSII is composed of 1 copy each of membrane proteins PsbA, PsbB, PsbC, PsbD, PsbE, PsbF, PsbH, PsbI, PsbJ, PsbK, PsbL, PsbM, PsbT, PsbY, PsbZ, Psb30/Ycf12, at least 3 peripheral proteins of the oxygen-evolving complex and a large number of cofactors. It forms dimeric complexes.

It localises to the plastid. Its subcellular location is the chloroplast thylakoid membrane. Found at the monomer-monomer interface of the photosystem II (PS II) dimer, plays a role in assembly and dimerization of PSII. PSII is a light-driven water plastoquinone oxidoreductase, using light energy to abstract electrons from H(2)O, generating a proton gradient subsequently used for ATP formation. This chain is Photosystem II reaction center protein T, found in Tupiella akineta (Green alga).